Reading from the N-terminus, the 102-residue chain is Flagellar hook-basal body complex protein FliE (102 aa).

This sequence belongs to the FliE family.

Its subcellular location is the bacterial flagellum basal body. The protein is Flagellar hook-basal body complex protein FliE of Halalkalibacterium halodurans (strain ATCC BAA-125 / DSM 18197 / FERM 7344 / JCM 9153 / C-125) (Bacillus halodurans).